A 388-amino-acid chain; its full sequence is Chorismate synthase (388 aa).

NADP(+)-binding residues include Arg-39 and Arg-45. FMN is bound by residues 132-134 (RSS), 251-252 (NA), Gly-296, 311-315 (KPIPT), and Arg-337.

It belongs to the chorismate synthase family. Homotetramer. The cofactor is FMNH2.

It catalyses the reaction 5-O-(1-carboxyvinyl)-3-phosphoshikimate = chorismate + phosphate. Its pathway is metabolic intermediate biosynthesis; chorismate biosynthesis; chorismate from D-erythrose 4-phosphate and phosphoenolpyruvate: step 7/7. Functionally, catalyzes the anti-1,4-elimination of the C-3 phosphate and the C-6 proR hydrogen from 5-enolpyruvylshikimate-3-phosphate (EPSP) to yield chorismate, which is the branch point compound that serves as the starting substrate for the three terminal pathways of aromatic amino acid biosynthesis. This reaction introduces a second double bond into the aromatic ring system. This chain is Chorismate synthase, found in Staphylococcus aureus (strain MW2).